The primary structure comprises 225 residues: MILPELFDLWQETLEWQPDGAQQARFQQLYDLILEGNQRFNLTRITQPEEFWEKHLWDSLSGLAWLQKSQPDLLTKSLSVIDLGTGAGFPGVPIAIAYPHWSVTLLDSTQKKINFLEEVIDKLELNNTKTRLGRAEIVGKNLKHNCAYDIVCLRAVGNVDICVNYALPFLKKTGIAILYRGQWSAQDSLSLEENLGKAGGKILEIASFTTPLSESVRHCLYISKK.

S-adenosyl-L-methionine contacts are provided by residues Gly84, Phe89, 107-109 (DST), 135-136 (AE), and Arg154.

Belongs to the methyltransferase superfamily. RNA methyltransferase RsmG family.

The protein localises to the cytoplasm. Specifically methylates the N7 position of a guanine in 16S rRNA. This is Ribosomal RNA small subunit methyltransferase G from Microcystis aeruginosa (strain NIES-843 / IAM M-2473).